Consider the following 338-residue polypeptide: Solute carrier family 35 member G5 (338 aa).

Residues 1 to 21 form a disordered region; that stretch reads MAGSHPYFNLPDSTHPSPPSA. 9 helical membrane-spanning segments follow: residues 37 to 57, 67 to 87, 105 to 125, 160 to 180, 190 to 210, 221 to 241, 250 to 270, 281 to 301, and 305 to 325; these read TNGL…VGPL, LPSL…ALPL, CFCA…VQVV, CGLL…LWTL, ALGY…LLVY, TVAF…LFVL, LLSW…FTCV, LVCA…YYVL, and VAPF…IITA. In terms of domain architecture, EamA 1 spans 49 to 174; that stretch reads LPAGFVGPLS…SILGLIIIVG (126 aa). An EamA 2 domain is found at 272–325; it reads YAVTKAHPALVCAVLHSEVVVALILQYYVLHETVAPFDITGAGIVLGSIAIITA.

It belongs to the SLC35G solute transporter family.

The protein localises to the membrane. The chain is Solute carrier family 35 member G5 (SLC35G5) from Pan paniscus (Pygmy chimpanzee).